A 452-amino-acid polypeptide reads, in one-letter code: 5'-nucleotidase domain-containing protein 1 (452 aa).

The Nucleophile role is filled by D16. 2 residues coordinate Mg(2+): D16 and D18. D18 (proton donor) is an active-site residue. Position 171 is an N6-acetyllysine (K171). D313 lines the Mg(2+) pocket. A compositionally biased stretch (basic and acidic residues) spans 339–361 (GDKDGKPEESEPEEKKGKYEGSK). Residues 339-365 (GDKDGKPEESEPEEKKGKYEGSKAKPL) are disordered.

The protein belongs to the 5'(3')-deoxyribonucleotidase family.

This is 5'-nucleotidase domain-containing protein 1 (NT5DC1) from Bos taurus (Bovine).